Consider the following 642-residue polypeptide: Forkhead box protein K2 (642 aa).

The region spanning 30–91 (VTIGRNSSQG…NGVFVDGVFQ (62 aa)) is the FHA domain. The tract at residues 201-221 (QSENDKDASGGDSPKDDSKPP) is disordered. Basic and acidic residues predominate over residues 203-219 (ENDKDASGGDSPKDDSK). The fork-head DNA-binding region spans 219-314 (KPPYSYAQLI…EQAFRKRRPR (96 aa)). Residues 261 to 279 (KGWQNSIRHNLSLNRYFIK) form a DNA-binding; major groove region. Residues Leu-271, Ser-272, Asn-274, and Phe-277 each contribute to the Mg(2+) site. DNA-binding; minor groove regions lie at residues 289-293 (KGSFW) and 309-314 (RKRRPR). Disordered stretches follow at residues 323–359 (LGPL…REGS) and 589–615 (ASAS…KTDE). Composition is skewed to polar residues over residues 327–353 (SSRS…TPES) and 589–605 (ASAS…QSEQ). Positions 606–615 (PDIKRGKTDE) are enriched in basic and acidic residues.

As to expression, in neurula embryos, expressed strongly in the future floor plate and weakly in the neural crest progenitor cells. As development progresses, expression becomes stronger in neural crest cells. At stage 24, expressed in the eye, brain, branchial arches and in the presomitic mesoderm in the posterior embryo. At stage 29, additionally expressed in the pronephric tubules. At stage 35, expressed in the migrating lateral muscle precursors of the abdomen. Additionally, the developing proctodeum and head structures including the branchial arches, eyes and otic vesicles continue to show expression. Expression also persists in the nephros.

It localises to the nucleus. It is found in the cytoplasm. Its function is as follows. Transcriptional regulator involved in different processes such as glucose metabolism, aerobic glycolysis and autophagy. Recognizes and binds the forkhead DNA sequence motif (5'-GTAAACA-3') and can both act as a transcription activator or repressor, depending on the context. Acts as a key regulator of metabolic reprogramming towards aerobic glycolysis, a process in which glucose is converted to lactate in the presence of oxygen. Acts as a negative regulator of autophagy in skeletal muscle: in response to starvation, enters the nucleus, binds the promoters of autophagy genes and represses their expression, preventing proteolysis of skeletal muscle proteins. This is Forkhead box protein K2 from Xenopus laevis (African clawed frog).